The primary structure comprises 297 residues: Protoheme IX farnesyltransferase (297 aa).

The next 9 membrane-spanning stretches (helical) occupy residues 26 to 46, 48 to 68, 96 to 116, 120 to 140, 147 to 167, 174 to 194, 218 to 238, 243 to 263, and 276 to 296; these read VTQLAVFCAVIGMFLATPGMV, YPVLFGGIAGIWLLAGAAFAV, FHIIIFSIILGSLGMIILWNF, LTMWLTLATFVGYAVIYTWLL, NIVIGGLSGAMPPALGWAAVT, AWLLVLIIFVWTPPHFWALAL, LLNILLYTLILIAATLLPYIY, IIYLISAIVLGLMFLAYVIAL, and FRFSITYLSLLFAALLIDHYF.

This sequence belongs to the UbiA prenyltransferase family. Protoheme IX farnesyltransferase subfamily.

The protein resides in the cell membrane. The catalysed reaction is heme b + (2E,6E)-farnesyl diphosphate + H2O = Fe(II)-heme o + diphosphate. It participates in porphyrin-containing compound metabolism; heme O biosynthesis; heme O from protoheme: step 1/1. Functionally, converts heme B (protoheme IX) to heme O by substitution of the vinyl group on carbon 2 of heme B porphyrin ring with a hydroxyethyl farnesyl side group. The polypeptide is Protoheme IX farnesyltransferase (Polynucleobacter asymbioticus (strain DSM 18221 / CIP 109841 / QLW-P1DMWA-1) (Polynucleobacter necessarius subsp. asymbioticus)).